The sequence spans 366 residues: Pyrimidine monooxygenase RutA (366 aa).

Residues 49 to 50, Asn-115, Glu-124, 140 to 141, and Ser-190 each bind FMN; these read IK and RY.

It belongs to the NtaA/SnaA/DszA monooxygenase family. RutA subfamily.

It catalyses the reaction uracil + FMNH2 + NADH + O2 = (Z)-3-ureidoacrylate + FMN + NAD(+) + H2O + H(+). The catalysed reaction is thymine + FMNH2 + NADH + O2 = (Z)-2-methylureidoacrylate + FMN + NAD(+) + H2O + H(+). Functionally, catalyzes the pyrimidine ring opening between N-3 and C-4 by an unusual flavin hydroperoxide-catalyzed mechanism, adding oxygen atoms in the process to yield ureidoacrylate peracid, that immediately reacts with FMN forming ureidoacrylate and FMN-N(5)-oxide. The FMN-N(5)-oxide reacts spontaneously with NADH to produce FMN. Requires the flavin reductase RutF to regenerate FMN in vivo. This is Pyrimidine monooxygenase RutA from Serratia proteamaculans (strain 568).